Consider the following 114-residue polypeptide: MTDDVALPLQFTDAAASKVKNLISDENNPDLKLRVYITGGGCSGFQYGFTFDDKVNEGDMTIEKSGVALVVDPMSLQYLVGGSVDYTEGLEGSRFIVTNPNAKTTCGCGSSFSI.

Cysteine 42, cysteine 106, and cysteine 108 together coordinate iron-sulfur cluster.

Belongs to the HesB/IscA family. In terms of assembly, homodimer. Iron-sulfur cluster is required as a cofactor.

In terms of biological role, required for insertion of 4Fe-4S clusters for at least IspG. The polypeptide is Iron-sulfur cluster insertion protein ErpA (Erwinia tasmaniensis (strain DSM 17950 / CFBP 7177 / CIP 109463 / NCPPB 4357 / Et1/99)).